The sequence spans 260 residues: Tryptophan 2,3-dioxygenase (260 aa).

Residues 34–38 (FIVIH) and Arg100 each bind substrate. Heme is bound at residue His219. Thr233 lines the substrate pocket.

Belongs to the tryptophan 2,3-dioxygenase family. As to quaternary structure, homotetramer. It depends on heme as a cofactor.

The catalysed reaction is L-tryptophan + O2 = N-formyl-L-kynurenine. The protein operates within amino-acid degradation; L-tryptophan degradation via kynurenine pathway; L-kynurenine from L-tryptophan: step 1/2. Functionally, heme-dependent dioxygenase that catalyzes the oxidative cleavage of the L-tryptophan (L-Trp) pyrrole ring and converts L-tryptophan to N-formyl-L-kynurenine. Catalyzes the oxidative cleavage of the indole moiety. The protein is Tryptophan 2,3-dioxygenase of Herpetosiphon aurantiacus (strain ATCC 23779 / DSM 785 / 114-95).